Consider the following 122-residue polypeptide: LYR motif-containing protein 1 (122 aa).

The protein belongs to the complex I LYR family.

In terms of biological role, may promote cell proliferation and inhibition of apoptosis of preadipocytes. This Rattus norvegicus (Rat) protein is LYR motif-containing protein 1 (Lyrm1).